A 368-amino-acid chain; its full sequence is Ribosomal RNA large subunit methyltransferase M (368 aa).

S-adenosyl-L-methionine is bound by residues S199, A232–G235, D251, D271, and D287. The Proton acceptor role is filled by K316.

This sequence belongs to the class I-like SAM-binding methyltransferase superfamily. RNA methyltransferase RlmE family. RlmM subfamily. As to quaternary structure, monomer.

Its subcellular location is the cytoplasm. It catalyses the reaction cytidine(2498) in 23S rRNA + S-adenosyl-L-methionine = 2'-O-methylcytidine(2498) in 23S rRNA + S-adenosyl-L-homocysteine + H(+). Its function is as follows. Catalyzes the 2'-O-methylation at nucleotide C2498 in 23S rRNA. The polypeptide is Ribosomal RNA large subunit methyltransferase M (Aromatoleum aromaticum (strain DSM 19018 / LMG 30748 / EbN1) (Azoarcus sp. (strain EbN1))).